Here is a 603-residue protein sequence, read N- to C-terminus: Glutamyl-tRNA(Gln) amidotransferase subunit E (603 aa).

Belongs to the GatB/GatE family. GatE subfamily. As to quaternary structure, heterodimer of GatD and GatE.

The catalysed reaction is L-glutamyl-tRNA(Gln) + L-glutamine + ATP + H2O = L-glutaminyl-tRNA(Gln) + L-glutamate + ADP + phosphate + H(+). Allows the formation of correctly charged Gln-tRNA(Gln) through the transamidation of misacylated Glu-tRNA(Gln) in organisms which lack glutaminyl-tRNA synthetase. The reaction takes place in the presence of glutamine and ATP through an activated gamma-phospho-Glu-tRNA(Gln). The GatDE system is specific for glutamate and does not act on aspartate. This is Glutamyl-tRNA(Gln) amidotransferase subunit E from Thermoplasma acidophilum (strain ATCC 25905 / DSM 1728 / JCM 9062 / NBRC 15155 / AMRC-C165).